A 148-amino-acid polypeptide reads, in one-letter code: Putative nickel-responsive regulator (148 aa).

Positions 88, 99, 101, and 107 each coordinate Ni(2+).

This sequence belongs to the transcriptional regulatory CopG/NikR family. It depends on Ni(2+) as a cofactor.

In terms of biological role, transcriptional regulator. The polypeptide is Putative nickel-responsive regulator (Helicobacter pylori (strain G27)).